Consider the following 479-residue polypeptide: Probable periplasmic serine endoprotease DegP-like (479 aa).

Residues M1–A27 form the signal peptide. Active-site charge relay system residues include H117, D147, and S220. Substrate contacts are provided by residues G218–S220 and L275–I279. 2 PDZ domains span residues L264–G355 and D361–G468. The tract at residues P368–V395 is disordered.

Belongs to the peptidase S1C family.

Its subcellular location is the periplasm. It carries out the reaction Acts on substrates that are at least partially unfolded. The cleavage site P1 residue is normally between a pair of hydrophobic residues, such as Val-|-Val.. Functionally, might be efficient in the degradation of transiently denatured and unfolded proteins which accumulate in the periplasm following stress conditions. This Pseudomonas putida (strain W619) protein is Probable periplasmic serine endoprotease DegP-like.